We begin with the raw amino-acid sequence, 441 residues long: Ribosomal protein uS12 methylthiotransferase RimO (441 aa).

The MTTase N-terminal domain occupies 6–116 (QKVGIVSLGC…VVAAVHEAAP (111 aa)). [4Fe-4S] cluster contacts are provided by Cys15, Cys51, Cys80, Cys147, Cys151, and Cys154. Residues 133 to 370 (LTPRHYAYLK…MAAQQEISER (238 aa)) enclose the Radical SAM core domain. The 67-residue stretch at 373–439 (AQKVGTVIEA…EYDLWGSLAG (67 aa)) folds into the TRAM domain.

It belongs to the methylthiotransferase family. RimO subfamily. Requires [4Fe-4S] cluster as cofactor.

The protein resides in the cytoplasm. The catalysed reaction is L-aspartate(89)-[ribosomal protein uS12]-hydrogen + (sulfur carrier)-SH + AH2 + 2 S-adenosyl-L-methionine = 3-methylsulfanyl-L-aspartate(89)-[ribosomal protein uS12]-hydrogen + (sulfur carrier)-H + 5'-deoxyadenosine + L-methionine + A + S-adenosyl-L-homocysteine + 2 H(+). Functionally, catalyzes the methylthiolation of an aspartic acid residue of ribosomal protein uS12. The protein is Ribosomal protein uS12 methylthiotransferase RimO of Rhodospirillum rubrum (strain ATCC 11170 / ATH 1.1.1 / DSM 467 / LMG 4362 / NCIMB 8255 / S1).